We begin with the raw amino-acid sequence, 256 residues long: MLVLVSPAKTLDYDNPAATTEYTLPKLTQYSEQLIEECRKLTPADIASLMKVSDKIAGLNAARFESWSPRFTTGNAKQAVYAFRGDVYTGLDADSLSEDSLSRAQSQLRILSGLYGLLKPLDLMQPYRLEMGTRLANAKGTNLYQFWGDVITDEVNASLKEQGDELLVNLASNEYFKAVKPKLVNGTIITPVFKDRKNGQYKVISFFAKKARGMMVRYILDNKVSNLEELNKFDMAGYYYCEAESTAASPVFKREE.

Belongs to the UPF0246 family.

This is UPF0246 protein Swoo_1284 from Shewanella woodyi (strain ATCC 51908 / MS32).